The primary structure comprises 192 residues: Ion-translocating oxidoreductase complex subunit A (192 aa).

The next 6 helical transmembrane spans lie at 5–25 (LLLLVGTVLVNNFVLVKFLGL), 39–59 (IGMSMATTFVLTLASILSYLV), 72–92 (LRTMAFILVIAVVVQFTEMLV), 102–122 (ALGIYLPLITTNCAVLGVALL), 134–154 (AIYGFGAAVGFSIVLILFSAM), and 171–191 (AIAMITAGLMSLAFMGFTGLV).

The protein belongs to the NqrDE/RnfAE family. As to quaternary structure, the complex is composed of six subunits: RnfA, RnfB, RnfC, RnfD, RnfE and RnfG.

The protein localises to the cell inner membrane. Functionally, part of a membrane-bound complex that couples electron transfer with translocation of ions across the membrane. This Shewanella loihica (strain ATCC BAA-1088 / PV-4) protein is Ion-translocating oxidoreductase complex subunit A.